The sequence spans 617 residues: Dihydroxy-acid dehydratase (617 aa).

Asp-82 provides a ligand contact to Mg(2+). Cys-123 is a [2Fe-2S] cluster binding site. Residues Asp-124 and Lys-125 each coordinate Mg(2+). Lys-125 carries the N6-carboxylysine modification. Cys-197 provides a ligand contact to [2Fe-2S] cluster. Glu-497 provides a ligand contact to Mg(2+). The active-site Proton acceptor is Ser-523.

The protein belongs to the IlvD/Edd family. As to quaternary structure, homodimer. It depends on [2Fe-2S] cluster as a cofactor. Mg(2+) serves as cofactor.

It carries out the reaction (2R)-2,3-dihydroxy-3-methylbutanoate = 3-methyl-2-oxobutanoate + H2O. It catalyses the reaction (2R,3R)-2,3-dihydroxy-3-methylpentanoate = (S)-3-methyl-2-oxopentanoate + H2O. It functions in the pathway amino-acid biosynthesis; L-isoleucine biosynthesis; L-isoleucine from 2-oxobutanoate: step 3/4. Its pathway is amino-acid biosynthesis; L-valine biosynthesis; L-valine from pyruvate: step 3/4. Functions in the biosynthesis of branched-chain amino acids. Catalyzes the dehydration of (2R,3R)-2,3-dihydroxy-3-methylpentanoate (2,3-dihydroxy-3-methylvalerate) into 2-oxo-3-methylpentanoate (2-oxo-3-methylvalerate) and of (2R)-2,3-dihydroxy-3-methylbutanoate (2,3-dihydroxyisovalerate) into 2-oxo-3-methylbutanoate (2-oxoisovalerate), the penultimate precursor to L-isoleucine and L-valine, respectively. This Streptomyces avermitilis (strain ATCC 31267 / DSM 46492 / JCM 5070 / NBRC 14893 / NCIMB 12804 / NRRL 8165 / MA-4680) protein is Dihydroxy-acid dehydratase.